The chain runs to 215 residues: MADIRVKICGMKTRADMEAAAAAGAAYVGLNFYAKSARSVTIAQAAALASDAPVGLAKVGLVVNPTDADLDAITGSVPLDMIQLHGQESVERVAEIKTRYGLPVMKVIGVAEAADLDPIDLYAQVADQLMVDAKAPKGAKLPGGNGISFDWQLLASKKYWQAPWMLAGGLTPENVAEAIRKTGARQVDVASGVESAPAQKDPDLMRAFVEAAQAV.

It belongs to the TrpF family.

It catalyses the reaction N-(5-phospho-beta-D-ribosyl)anthranilate = 1-(2-carboxyphenylamino)-1-deoxy-D-ribulose 5-phosphate. Its pathway is amino-acid biosynthesis; L-tryptophan biosynthesis; L-tryptophan from chorismate: step 3/5. This Ruegeria sp. (strain TM1040) (Silicibacter sp.) protein is N-(5'-phosphoribosyl)anthranilate isomerase.